The sequence spans 281 residues: Small ribosomal subunit biogenesis GTPase RsgA (281 aa).

The CP-type G domain occupies 59-212 (QNEFIRPKVA…LIDTPGFSSL (154 aa)). Residues 108–111 (TKAD) and 155–163 (GQSGVGKTT) each bind GTP. Positions 235, 240, 242, and 250 each coordinate Zn(2+).

It belongs to the TRAFAC class YlqF/YawG GTPase family. RsgA subfamily. Monomer. Associates with 30S ribosomal subunit, binds 16S rRNA. Zn(2+) serves as cofactor.

The protein resides in the cytoplasm. In terms of biological role, one of several proteins that assist in the late maturation steps of the functional core of the 30S ribosomal subunit. Helps release RbfA from mature subunits. May play a role in the assembly of ribosomal proteins into the subunit. Circularly permuted GTPase that catalyzes slow GTP hydrolysis, GTPase activity is stimulated by the 30S ribosomal subunit. The chain is Small ribosomal subunit biogenesis GTPase RsgA from Mycoplasmopsis agalactiae (strain NCTC 10123 / CIP 59.7 / PG2) (Mycoplasma agalactiae).